Reading from the N-terminus, the 103-residue chain is Small ribosomal subunit protein uS10 (103 aa).

This sequence belongs to the universal ribosomal protein uS10 family. In terms of assembly, part of the 30S ribosomal subunit.

Involved in the binding of tRNA to the ribosomes. The sequence is that of Small ribosomal subunit protein uS10 from Salinibacter ruber (strain DSM 13855 / M31).